Reading from the N-terminus, the 559-residue chain is Actin-binding protein WASF1 (559 aa).

3 disordered regions span residues 170–202 (EDKRKEKRKQKQKNLDRPHEPEKVPRAPHDRRR), 304–383 (IENR…GVLH), and 412–490 (VHPL…HPST). Over residues 182-202 (KNLDRPHEPEKVPRAPHDRRR) the composition is skewed to basic and acidic residues. Residues 304-313 (IENRPQSPAT) are compositionally biased toward polar residues. Positions 322-332 (PTPPPPPPPLP) are enriched in pro residues. The span at 333-346 (SALSTSSLRASMTS) shows a compositional bias: low complexity. R341 carries the post-translational modification Asymmetric dimethylarginine; alternate. The residue at position 341 (R341) is an Omega-N-methylarginine; alternate. Composition is skewed to pro residues over residues 347–360 (TPPPPVPPPPPPPA), 423–437 (LPPPPPPPPLPPPGI), and 460–477 (STAPGPHVPLMPPSPPSQ). Phosphoserine is present on S489. One can recognise a WH2 domain in the interval 497–514 (ARSVLLEAIRKGIQLRKV).

Belongs to the SCAR/WAVE family. Component of the WAVE1 complex composed of ABI2, CYFIP1 or CYFIP2, BRK1, NCKAP1 and WASF1/WAVE1. Within the complex, a heterodimer containing NCKAP1 and CYFIP1 interacts with a heterotrimer formed by WAVE1, ABI2 and BRK1. CYFIP2 binds to activated RAC1 which causes the complex to dissociate, releasing activated WASF1. The complex can also be activated by NCK1. Binds actin and the Arp2/3 complex. Interacts with BAIAP2. Interacts with SHANK3; the interaction mediates the association of SHANK3 with the WAVE1 complex. Interacts with ABI1 (via N-terminus). Interacts with SORBS2; this interaction greatly enhances phosphorylation by ABL1 and dephosphorylation by PTPN12 and might mediate partial to focal adhesion sites.

It localises to the cytoplasm. The protein resides in the cytoskeleton. The protein localises to the synapse. It is found in the cell junction. Its subcellular location is the focal adhesion. Its function is as follows. Downstream effector molecule involved in the transmission of signals from tyrosine kinase receptors and small GTPases to the actin cytoskeleton. Promotes formation of actin filaments. Part of the WAVE complex that regulates lamellipodia formation. The WAVE complex regulates actin filament reorganization via its interaction with the Arp2/3 complex. As component of the WAVE1 complex, required for BDNF-NTRK2 endocytic trafficking and signaling from early endosomes. Also involved in the regulation of mitochondrial dynamics. This is Actin-binding protein WASF1 (WASF1) from Pongo abelii (Sumatran orangutan).